Reading from the N-terminus, the 180-residue chain is 2-oxoglutarate dehydrogenase, mitochondrial (180 aa).

K14 carries the post-translational modification N6-succinyllysine. At S40 the chain carries Phosphoserine. R64 contributes to the thiamine diphosphate binding site.

Belongs to the alpha-ketoglutarate dehydrogenase family. In terms of assembly, homodimer. The 2-oxoglutarate dehydrogenase complex is composed of OGDH (2-oxoglutarate dehydrogenase; E1), DLST (dihydrolipoamide succinyltransferase; E2) and DLD (dihydrolipoamide dehydrogenase; E3). It contains multiple copies of the three enzymatic components (E1, E2 and E3). In the nucleus, the 2-oxoglutarate dehydrogenase complex associates with KAT2A. Interacts with ABHD11; this interaction maintains the functional lipoylation of the 2-oxoglutarate dehydrogenase complex. Thiamine diphosphate is required as a cofactor. The cofactor is Mg(2+).

It localises to the mitochondrion matrix. It is found in the nucleus. It catalyses the reaction N(6)-[(R)-lipoyl]-L-lysyl-[protein] + 2-oxoglutarate + H(+) = N(6)-[(R)-S(8)-succinyldihydrolipoyl]-L-lysyl-[protein] + CO2. Its activity is regulated as follows. Calcium ions and ADP stimulate, whereas ATP and NADH reduce catalytic activity. In terms of biological role, 2-oxoglutarate dehydrogenase (E1) component of the 2-oxoglutarate dehydrogenase complex (OGDHC), which mediates the decarboxylation of alpha-ketoglutarate. The 2-oxoglutarate dehydrogenase complex catalyzes the overall conversion of 2-oxoglutarate to succinyl-CoA and CO(2). The 2-oxoglutarate dehydrogenase complex is mainly active in the mitochondrion. A fraction of the 2-oxoglutarate dehydrogenase complex also localizes in the nucleus and is required for lysine succinylation of histones: associates with KAT2A on chromatin and provides succinyl-CoA to histone succinyltransferase KAT2A. This chain is 2-oxoglutarate dehydrogenase, mitochondrial, found in Mesocricetus auratus (Golden hamster).